Consider the following 838-residue polypeptide: Adenylate cyclase (838 aa).

Residues 1 to 541 are catalytic; it reads MNYDLFSAQK…DLRLSFPVTV (541 aa). The regulatory stretch occupies residues 547–838; it reads EDLTHACEIR…VPFHSRLAMS (292 aa).

Belongs to the adenylyl cyclase class-1 family.

It localises to the cytoplasm. It catalyses the reaction ATP = 3',5'-cyclic AMP + diphosphate. In Pasteurella multocida (strain Pm70), this protein is Adenylate cyclase (cya).